A 630-amino-acid chain; its full sequence is Triacylglycerol lipase ptl2 (630 aa).

Residues Leu-251–Arg-442 form the PNPLA domain. A GXSXG motif is present at residues Gly-282–Gly-286. Ser-284 acts as the Nucleophile in catalysis. The active-site Proton acceptor is Asp-429.

It belongs to the PLPL family.

Its subcellular location is the lipid droplet. The enzyme catalyses a triacylglycerol + H2O = a diacylglycerol + a fatty acid + H(+). Functionally, lipid particle-localized triacylglycerol (TAG) lipase. The lipid droplet/particle is a lipid storage compartment which serves as a depot of energy and building blocks for membrane lipid biosynthesis. Involved in the mobilization of the non-polar storage lipids triacylglycerols (TAGs) from lipid particles by hydrolysis of TAGs, releasing and supplying specific fatty acids to the appropriate metabolic pathways. The protein is Triacylglycerol lipase ptl2 (ptl2) of Schizosaccharomyces pombe (strain 972 / ATCC 24843) (Fission yeast).